The chain runs to 360 residues: Photosystem II protein D1 1 (360 aa).

Transmembrane regions (helical) follow at residues 29–46 (YIGWFGVLMIPTLLTATT), 118–133 (HFLIGIFCYLGRQWEL), and 142–156 (WICVAYSAPVAAATA). Chlorophyll a is bound at residue His-118. Tyr-126 lines the pheophytin a pocket. Residues Asp-170 and Glu-189 each contribute to the [CaMn4O5] cluster site. A helical transmembrane segment spans residues 197-218 (FHMLGVAGVFGGALFAAMHGSL). His-198 contacts chlorophyll a. Residues His-215 and 264–265 (SF) contribute to the a quinone site. His-215 contributes to the Fe cation binding site. His-272 lines the Fe cation pocket. The chain crosses the membrane as a helical span at residues 274 to 288 (FLGAWPVVGIWFAAL). The [CaMn4O5] cluster site is built by His-332, Glu-333, Asp-342, and Ala-344. Positions 345–360 (SGDAQMVALNAPAIEG) are excised as a propeptide.

Belongs to the reaction center PufL/M/PsbA/D family. PSII is composed of 1 copy each of membrane proteins PsbA, PsbB, PsbC, PsbD, PsbE, PsbF, PsbH, PsbI, PsbJ, PsbK, PsbL, PsbM, PsbT, PsbX, PsbY, PsbZ, Psb30/Ycf12, peripheral proteins PsbO, CyanoQ (PsbQ), PsbU, PsbV and a large number of cofactors. It forms dimeric complexes. It depends on The D1/D2 heterodimer binds P680, chlorophylls that are the primary electron donor of PSII, and subsequent electron acceptors. It shares a non-heme iron and each subunit binds pheophytin, quinone, additional chlorophylls, carotenoids and lipids. D1 provides most of the ligands for the Mn4-Ca-O5 cluster of the oxygen-evolving complex (OEC). There is also a Cl(-1) ion associated with D1 and D2, which is required for oxygen evolution. The PSII complex binds additional chlorophylls, carotenoids and specific lipids. as a cofactor. In terms of processing, C-terminally processed by CtpA; processing is essential to allow assembly of the oxygen-evolving complex and photosynthetic growth. Post-translationally, tyr-161 forms a radical intermediate that is referred to as redox-active TyrZ, YZ or Y-Z. C-terminally processed by CtpA; processing is essential to allow assembly of the oxygen-evolving complex and thus photosynthetic growth.

The protein localises to the cellular thylakoid membrane. The enzyme catalyses 2 a plastoquinone + 4 hnu + 2 H2O = 2 a plastoquinol + O2. In terms of biological role, photosystem II (PSII) is a light-driven water:plastoquinone oxidoreductase that uses light energy to abstract electrons from H(2)O, generating O(2) and a proton gradient subsequently used for ATP formation. It consists of a core antenna complex that captures photons, and an electron transfer chain that converts photonic excitation into a charge separation. The D1/D2 (PsbA/PsbD) reaction center heterodimer binds P680, the primary electron donor of PSII as well as several subsequent electron acceptors. The protein is Photosystem II protein D1 1 of Synechocystis sp. (strain ATCC 27184 / PCC 6803 / Kazusa).